The sequence spans 840 residues: Translation initiation factor IF-2 (840 aa).

Residues 1-251 form a disordered region; the sequence is MTEEKKFSSS…GPAVPATERK (251 aa). Polar residues-rich tracts occupy residues 38-50 and 65-83; these read DGTNSSAGTTPRS and NRHTNSSRSNTQGGNASRP. Low complexity predominate over residues 84–102; the sequence is NQSKSQGQGGRNNQRPGSR. 2 stretches are compositionally biased toward basic and acidic residues: residues 110–135 and 158–168; these read PMIREKKNWSTKPREGQIDYSKKTDN and KPAEQSKKAAE. Over residues 169–207 the composition is skewed to low complexity; the sequence is KPAQTKPKTAETKTTATTTQSGTGKFGGALASGNNSARN. Over residues 230-239 the composition is skewed to basic residues; that stretch reads GSKKSRRIAA. A tr-type G domain is found at 341 to 510; the sequence is ARPPVVTIMG…LLQAEVLELK (170 aa). Residues 350–357 form a G1 region; sequence GHVDHGKT. 350-357 lines the GTP pocket; the sequence is GHVDHGKT. Positions 375–379 are G2; the sequence is GITQH. The tract at residues 396–399 is G3; sequence DTPG. Residues 396–400 and 450–453 each bind GTP; these read DTPGH and NKID. The G4 stretch occupies residues 450 to 453; that stretch reads NKID. Residues 486–488 form a G5 region; the sequence is SAK.

This sequence belongs to the TRAFAC class translation factor GTPase superfamily. Classic translation factor GTPase family. IF-2 subfamily.

It is found in the cytoplasm. Functionally, one of the essential components for the initiation of protein synthesis. Protects formylmethionyl-tRNA from spontaneous hydrolysis and promotes its binding to the 30S ribosomal subunits. Also involved in the hydrolysis of GTP during the formation of the 70S ribosomal complex. This Leuconostoc citreum (strain KM20) protein is Translation initiation factor IF-2.